The primary structure comprises 364 residues: MGVIHEETAYRKPVPGGDPGAGSGAADHRDSAGRLSRWEATGDVRNVAGTDQGRSVASGASRVGRVRGQELARGVRAGNGGSAGTSGVHRPEVGSGRQEKTGNQTMKTLVTANQKGGVGKTSTLVHLAFDFFERGLRVAVIDLDPQGNASYTLKDFATGLHASKLFGAVPAGGWTETAPAAGDGQAARLALIESNPVLANAERLSLDDARELFGANIKALANQGFDVCLIDTAPTLGVGLAAALFAADYVLSPIELEAYSIQGIKKMVTTIANVRQKNAKLQFLGMVPSKVDARNPRHARHQAELLAAYPKMMIPATVGLRSSIADALASGVPVWKIKKTAARKASKEVRALADYVFTKMEISQ.

3 stretches are compositionally biased toward basic and acidic residues: residues 1-10 (MGVIHEETAY), 26-42 (ADHR…EATG), and 89-100 (HRPEVGSGRQEK). Disordered regions lie at residues 1 to 63 (MGVI…ASRV) and 75 to 102 (VRAG…EKTG).

It belongs to the ParA family.

This is one of the proteins encoded by the trfB operon; it is involved in plasmid maintenance and replication. This chain is Protein IncC (incC), found in Escherichia coli.